A 372-amino-acid polypeptide reads, in one-letter code: Ligninase LG3 (372 aa).

The signal sequence occupies residues 1-21; the sequence is MAFKQLFAAISLALSLSAANA. Residues 22–28 constitute a propeptide that is removed on maturation; it reads AAVIEKR. Intrachain disulfides connect Cys-31–Cys-43 and Cys-62–Cys-148. His-75 functions as the Proton acceptor in the catalytic mechanism. Residues Asp-76, Gly-94, Asp-96, and Ser-98 each coordinate Ca(2+). Heme b is bound at residue His-204. Residues Ser-205, Asp-222, Thr-224, Ile-227, and Asp-229 each coordinate Ca(2+). A disulfide bond links Cys-277 and Cys-345. Asn-285 is a glycosylation site (N-linked (GlcNAc...) asparagine). Residues 350 to 361 show a composition bias toward low complexity; it reads FPTLTTLPGPET. The segment at 350–372 is disordered; that stretch reads FPTLTTLPGPETSVQRIPPPPGA.

This sequence belongs to the peroxidase family. Ligninase subfamily. Heme b is required as a cofactor. Ca(2+) serves as cofactor.

The enzyme catalyses 1-(3,4-dimethoxyphenyl)-2-(2-methoxyphenoxy)propane-1,3-diol + H2O2 = 3,4-dimethoxybenzaldehyde + guaiacol + glycolaldehyde + H2O. It catalyses the reaction 2 (3,4-dimethoxyphenyl)methanol + H2O2 = 2 (3,4-dimethoxyphenyl)methanol radical + 2 H2O. Its pathway is secondary metabolite metabolism; lignin degradation. Its function is as follows. Depolymerization of lignin. Catalyzes the C(alpha)-C(beta) cleavage of the propyl side chains of lignin. The polypeptide is Ligninase LG3 (GLG3) (Phanerodontia chrysosporium (White-rot fungus)).